We begin with the raw amino-acid sequence, 106 residues long: Stress-responsive protein 1 (106 aa).

It is found in the mitochondrion. Stress-responsive protein that may play a role in regulation of cell cycle. This Schizosaccharomyces pombe (strain 972 / ATCC 24843) (Fission yeast) protein is Stress-responsive protein 1 (sro1).